Reading from the N-terminus, the 374-residue chain is Chaperone protein DnaJ (374 aa).

Residues aspartate 5–glycine 70 enclose the J domain. The CR-type zinc-finger motif lies at glycine 136–glutamate 214. 8 residues coordinate Zn(2+): cysteine 149, cysteine 152, cysteine 166, cysteine 169, cysteine 188, cysteine 191, cysteine 202, and cysteine 205. 4 CXXCXGXG motif repeats span residues cysteine 149–glycine 156, cysteine 166–glycine 173, cysteine 188–glycine 195, and cysteine 202–glycine 209.

This sequence belongs to the DnaJ family. In terms of assembly, homodimer. Zn(2+) serves as cofactor.

It is found in the cytoplasm. Functionally, participates actively in the response to hyperosmotic and heat shock by preventing the aggregation of stress-denatured proteins and by disaggregating proteins, also in an autonomous, DnaK-independent fashion. Unfolded proteins bind initially to DnaJ; upon interaction with the DnaJ-bound protein, DnaK hydrolyzes its bound ATP, resulting in the formation of a stable complex. GrpE releases ADP from DnaK; ATP binding to DnaK triggers the release of the substrate protein, thus completing the reaction cycle. Several rounds of ATP-dependent interactions between DnaJ, DnaK and GrpE are required for fully efficient folding. Also involved, together with DnaK and GrpE, in the DNA replication of plasmids through activation of initiation proteins. The chain is Chaperone protein DnaJ from Wolbachia sp. subsp. Brugia malayi (strain TRS).